The following is a 473-amino-acid chain: Suppressor of SWI4 1 homolog (473 aa).

The Brix domain occupies 29-292 (PHSFVFTRGC…LIKVQEGVGE (264 aa)). 2 positions are modified to phosphoserine: S238 and S240. Residues 323 to 473 (AQRQAQQAQN…GRGRPRKRVA (151 aa)) form a disordered region. Over residues 324 to 334 (QRQAQQAQNVQ) the composition is skewed to low complexity. Positions 335–360 (RKQEQREAHRKKSLEGMKKARVRGGD) are enriched in basic and acidic residues. The span at 376–388 (GEDDDEQEDDDIE) shows a compositional bias: acidic residues. The span at 407-421 (KRKRLAKSPGQKRKR) shows a compositional bias: basic residues. Basic and acidic residues predominate over residues 422-444 (REMDRGRGRLCDQKFPKPKDKSH). At K438 the chain carries N6-acetyllysine. A compositionally biased stretch (basic residues) spans 464 to 473 (GRGRPRKRVA).

It localises to the nucleus. Its subcellular location is the nucleolus. In terms of biological role, may have a role in cell growth. In Pongo abelii (Sumatran orangutan), this protein is Suppressor of SWI4 1 homolog (PPAN).